We begin with the raw amino-acid sequence, 407 residues long: Carbamoyl phosphate synthase small chain (407 aa).

The tract at residues 1–205 is CPSase; it reads MTETTPKTAP…LQDGYGEQDA (205 aa). 3 residues coordinate L-glutamine: S60, G257, and G259. Positions 209 to 397 constitute a Glutamine amidotransferase type-1 domain; the sequence is HVVALDFGVK…INLIRERKGQ (189 aa). C286 acts as the Nucleophile in catalysis. L-glutamine-binding residues include L287, Q290, N328, G330, and F331. Residues H370 and E372 contribute to the active site.

Belongs to the CarA family. Composed of two chains; the small (or glutamine) chain promotes the hydrolysis of glutamine to ammonia, which is used by the large (or ammonia) chain to synthesize carbamoyl phosphate. Tetramer of heterodimers (alpha,beta)4.

The enzyme catalyses hydrogencarbonate + L-glutamine + 2 ATP + H2O = carbamoyl phosphate + L-glutamate + 2 ADP + phosphate + 2 H(+). It catalyses the reaction L-glutamine + H2O = L-glutamate + NH4(+). It functions in the pathway amino-acid biosynthesis; L-arginine biosynthesis; carbamoyl phosphate from bicarbonate: step 1/1. It participates in pyrimidine metabolism; UMP biosynthesis via de novo pathway; (S)-dihydroorotate from bicarbonate: step 1/3. Its function is as follows. Small subunit of the glutamine-dependent carbamoyl phosphate synthetase (CPSase). CPSase catalyzes the formation of carbamoyl phosphate from the ammonia moiety of glutamine, carbonate, and phosphate donated by ATP, constituting the first step of 2 biosynthetic pathways, one leading to arginine and/or urea and the other to pyrimidine nucleotides. The small subunit (glutamine amidotransferase) binds and cleaves glutamine to supply the large subunit with the substrate ammonia. This Brucella canis (strain ATCC 23365 / NCTC 10854 / RM-666) protein is Carbamoyl phosphate synthase small chain.